Reading from the N-terminus, the 255-residue chain is Tryptophan synthase alpha chain (255 aa).

Catalysis depends on proton acceptor residues Glu-42 and Asp-53.

Belongs to the TrpA family. Tetramer of two alpha and two beta chains.

It catalyses the reaction (1S,2R)-1-C-(indol-3-yl)glycerol 3-phosphate + L-serine = D-glyceraldehyde 3-phosphate + L-tryptophan + H2O. The protein operates within amino-acid biosynthesis; L-tryptophan biosynthesis; L-tryptophan from chorismate: step 5/5. In terms of biological role, the alpha subunit is responsible for the aldol cleavage of indoleglycerol phosphate to indole and glyceraldehyde 3-phosphate. This Wolinella succinogenes (strain ATCC 29543 / DSM 1740 / CCUG 13145 / JCM 31913 / LMG 7466 / NCTC 11488 / FDC 602W) (Vibrio succinogenes) protein is Tryptophan synthase alpha chain.